The primary structure comprises 101 residues: Small ribosomal subunit protein uS14A (101 aa).

2 stretches are compositionally biased toward basic and acidic residues: residues Lys28–Ala44 and Arg61–Pro70. Positions Lys28–Leu74 are disordered.

This sequence belongs to the universal ribosomal protein uS14 family. Part of the 30S ribosomal subunit. Contacts proteins S3 and S10.

Its function is as follows. Binds 16S rRNA, required for the assembly of 30S particles and may also be responsible for determining the conformation of the 16S rRNA at the A site. The sequence is that of Small ribosomal subunit protein uS14A from Rhodococcus jostii (strain RHA1).